Consider the following 422-residue polypeptide: MTDYQNEVLEFERIMKEHTNYMRNSINLIASENITSSDVTEAVASDLAHRYAEGQSHERLYEGCQYIDEIEDRVIDLSKKLFNVDYANVQPISGVTANLAAFFGYSDYGDKLMALDVPYGGHISHAKVSAAGIAGLKTISHPFDKDIMNIDIDAMNKKILEEKPKIVLFGGSLFLFPHPVKEAREAADEVGAKIMYDAAHVLGLIAGGQFQQPIAEGADLMMGSTHKSFPGPQGGIILSHKENKEVIDNAVFPGVVSNHHLHHLAGLGIASAEMLEFGQDYAKQIVKNSKALAQSLYERGFDVLCEELGFTESHQLAINVSNIRSASDIAHDLANNDVILNKNLLPGDNVDDSDNPSGLRIGTQEITRRGLKEKEMDEVAEFIKRVAVDKENIKDEVREFMDQYTTVHYSFSQNEGYRFHKL.

121-123 (GHI) serves as a coordination point for (6S)-5,6,7,8-tetrahydrofolate. K227 is modified (N6-(pyridoxal phosphate)lysine). Position 245 (E245) interacts with (6S)-5,6,7,8-tetrahydrofolate.

Belongs to the SHMT family. Homodimer. The cofactor is pyridoxal 5'-phosphate.

It is found in the cytoplasm. It carries out the reaction 5,10-methylenetetrahydromethanopterin + glycine + H2O = 5,6,7,8-tetrahydromethanopterin + L-serine. It participates in amino-acid biosynthesis; glycine biosynthesis; glycine from L-serine: step 1/1. Its function is as follows. Catalyzes the reversible interconversion of serine and glycine with tetrahydromethanopterin (H4MPT) serving as the one-carbon carrier. Also exhibits a pteridine-independent aldolase activity toward beta-hydroxyamino acids, producing glycine and aldehydes, via a retro-aldol mechanism. The sequence is that of Serine hydroxymethyltransferase from Methanobrevibacter smithii (strain ATCC 35061 / DSM 861 / OCM 144 / PS).